Consider the following 57-residue polypeptide: Temporin-ALk (57 aa).

An N-terminal signal peptide occupies residues 1–22; that stretch reads MFTLKKSLLLLFFLGTINLSLC. A propeptide spanning residues 23-46 is cleaved from the precursor; sequence EQERNAEEERRDDLGERQAEVEKR. Serine amide is present on S56.

The protein belongs to the frog skin active peptide (FSAP) family. Temporin subfamily. Expressed by the skin glands.

The protein resides in the secreted. In terms of biological role, antimicrobial peptide with weak activity against Gram-positive and Gram-negative bacteria and against fungi. Has been tested against S.aureus (MIC=15.0 ug/mL), B.pumilus (no activity detected), B.cereus (no activity detected), E.coli (MIC=30.0 ug/mL), B.dysenteriae (MIC=60.0 ug/mL), A.cacoaceticus (MIC=75.0 ug/mL), P.aeruginosa (MIC=25.0 ug/mL) and C.albicans (MIC=15.0 ug/mL). Also shows a weak hemolytic activity. The chain is Temporin-ALk from Amolops loloensis (Lolokou Sucker Frog).